We begin with the raw amino-acid sequence, 358 residues long: 3-dehydroquinate synthase (358 aa).

NAD(+) contacts are provided by residues 102–106, 126–127, lysine 139, and lysine 148; these read GVVGD and TT. The Zn(2+) site is built by glutamate 181, histidine 244, and histidine 260.

This sequence belongs to the sugar phosphate cyclases superfamily. Dehydroquinate synthase family. Co(2+) serves as cofactor. Requires Zn(2+) as cofactor. It depends on NAD(+) as a cofactor.

The protein resides in the cytoplasm. The enzyme catalyses 7-phospho-2-dehydro-3-deoxy-D-arabino-heptonate = 3-dehydroquinate + phosphate. It functions in the pathway metabolic intermediate biosynthesis; chorismate biosynthesis; chorismate from D-erythrose 4-phosphate and phosphoenolpyruvate: step 2/7. In terms of biological role, catalyzes the conversion of 3-deoxy-D-arabino-heptulosonate 7-phosphate (DAHP) to dehydroquinate (DHQ). The polypeptide is 3-dehydroquinate synthase (Symbiobacterium thermophilum (strain DSM 24528 / JCM 14929 / IAM 14863 / T)).